A 460-amino-acid polypeptide reads, in one-letter code: Ribosomal protein uS12 methylthiotransferase RimO (460 aa).

One can recognise an MTTase N-terminal domain in the interval 9–119 (PKVGFVSLGC…VMEAVHAALP (111 aa)). Positions 18, 54, 83, 150, 154, and 157 each coordinate [4Fe-4S] cluster. The 239-residue stretch at 136 to 374 (LTPRHYAYLK…AKQAEISALR (239 aa)) folds into the Radical SAM core domain. The TRAM domain occupies 376-444 (EAKIGSVQQC…EHDLFGDALP (69 aa)).

This sequence belongs to the methylthiotransferase family. RimO subfamily. [4Fe-4S] cluster is required as a cofactor.

It is found in the cytoplasm. The enzyme catalyses L-aspartate(89)-[ribosomal protein uS12]-hydrogen + (sulfur carrier)-SH + AH2 + 2 S-adenosyl-L-methionine = 3-methylsulfanyl-L-aspartate(89)-[ribosomal protein uS12]-hydrogen + (sulfur carrier)-H + 5'-deoxyadenosine + L-methionine + A + S-adenosyl-L-homocysteine + 2 H(+). Functionally, catalyzes the methylthiolation of an aspartic acid residue of ribosomal protein uS12. This is Ribosomal protein uS12 methylthiotransferase RimO from Xanthomonas oryzae pv. oryzae (strain PXO99A).